A 151-amino-acid polypeptide reads, in one-letter code: Large ribosomal subunit protein bL9 (151 aa).

Belongs to the bacterial ribosomal protein bL9 family.

Binds to the 23S rRNA. This is Large ribosomal subunit protein bL9 from Desulforapulum autotrophicum (strain ATCC 43914 / DSM 3382 / VKM B-1955 / HRM2) (Desulfobacterium autotrophicum).